Here is a 265-residue protein sequence, read N- to C-terminus: Undecaprenyl-diphosphatase (265 aa).

Transmembrane regions (helical) follow at residues 38-58 (SDMF…IIYW), 80-100 (LIVA…LGFE), 107-127 (PIAW…WAAA), 135-155 (ITWL…VFPG), 175-195 (AAAT…ASGY), 213-233 (ALAI…KWLL), and 244-264 (FAIY…SGLI).

This sequence belongs to the UppP family.

The protein localises to the cell inner membrane. The enzyme catalyses di-trans,octa-cis-undecaprenyl diphosphate + H2O = di-trans,octa-cis-undecaprenyl phosphate + phosphate + H(+). Functionally, catalyzes the dephosphorylation of undecaprenyl diphosphate (UPP). Confers resistance to bacitracin. The chain is Undecaprenyl-diphosphatase from Rhizobium etli (strain CIAT 652).